Reading from the N-terminus, the 685-residue chain is Invasion protein InvA (685 aa).

8 helical membrane passes run 17-37 (ILVL…TYLV), 39-59 (FLIA…FYID), 61-81 (ILSF…RLAL), 110-130 (SLAV…IVIT), 197-217 (AIAG…VGMT), 235-255 (IGDG…AGFI), 274-294 (LLNN…MGTL), and 295-315 (PGFP…LFYF).

This sequence belongs to the FHIPEP (flagella/HR/invasion proteins export pore) family.

The protein localises to the cell inner membrane. In terms of biological role, involved in the invasion of the cells of the intestinal epithelium. Could be involved in the translocation of the InvE protein. This Salmonella typhi protein is Invasion protein InvA (invA).